The sequence spans 347 residues: 4-hydroxy-2-oxovalerate aldolase (347 aa).

Residues 2–252 (ILISDATLRD…DTRTTFERVM (251 aa)) enclose the Pyruvate carboxyltransferase domain. 10–11 (RD) is a binding site for substrate. Residue Asp-11 coordinates Mn(2+). Catalysis depends on His-14, which acts as the Proton acceptor. Substrate is bound by residues Ser-164 and His-191. Positions 191 and 193 each coordinate Mn(2+).

Belongs to the 4-hydroxy-2-oxovalerate aldolase family.

The enzyme catalyses (S)-4-hydroxy-2-oxopentanoate = acetaldehyde + pyruvate. The polypeptide is 4-hydroxy-2-oxovalerate aldolase (mhpE) (Burkholderia pseudomallei (strain K96243)).